The sequence spans 367 residues: Putrescine/agmatine-binding protein (367 aa).

A signal peptide spans 1–19 (MKKVCALALSILTTIGATA).

Belongs to the bacterial solute-binding protein 1 family.

Its subcellular location is the periplasm. In terms of biological role, binds putrescine and agmatine. This chain is Putrescine/agmatine-binding protein, found in Pseudomonas aeruginosa (strain ATCC 15692 / DSM 22644 / CIP 104116 / JCM 14847 / LMG 12228 / 1C / PRS 101 / PAO1).